Reading from the N-terminus, the 85-residue chain is Large ribosomal subunit protein bL31B (85 aa).

The protein belongs to the bacterial ribosomal protein bL31 family. Type B subfamily. As to quaternary structure, part of the 50S ribosomal subunit.

The sequence is that of Large ribosomal subunit protein bL31B from Kocuria rhizophila (strain ATCC 9341 / DSM 348 / NBRC 103217 / DC2201).